The primary structure comprises 456 residues: GTP cyclohydrolase 1 (456 aa).

Residues Cys-340, His-343, and Cys-412 each coordinate Zn(2+).

The protein belongs to the GTP cyclohydrolase I family. Homodimer. As to expression, expressed in leaves and unripe fruits.

The enzyme catalyses GTP + H2O = 7,8-dihydroneopterin 3'-triphosphate + formate + H(+). Its pathway is cofactor biosynthesis; 7,8-dihydroneopterin triphosphate biosynthesis; 7,8-dihydroneopterin triphosphate from GTP: step 1/1. GTP cyclohydrolase 1 is the first enzyme in the biosynthetic pathway leading to folic acid. The protein is GTP cyclohydrolase 1 (GCH1) of Solanum lycopersicum (Tomato).